Reading from the N-terminus, the 591-residue chain is 5'-nucleotidase domain-containing protein DDB_G0275467 (591 aa).

Composition is skewed to low complexity over residues 38–50 (STTTTSGIKSYST) and 68–78 (QHQQQQPQQHQ). Residues 38–88 (STTTTSGIKSYSTHNRSNNDTHTSKSNTIDQHQQQQPQQHQNNDNKHLFTP) form a disordered region. Catalysis depends on Asp-165, which acts as the Nucleophile. Residues Asp-165 and Asp-167 each coordinate Mg(2+). Residue Asp-167 is the Proton donor of the active site. 305–313 (TAAVGKVHL) contributes to the substrate binding site. Asp-450 lines the Mg(2+) pocket.

The protein belongs to the 5'(3')-deoxyribonucleotidase family. Mg(2+) is required as a cofactor.

The chain is 5'-nucleotidase domain-containing protein DDB_G0275467 from Dictyostelium discoideum (Social amoeba).